The sequence spans 371 residues: Protein-tyrosine sulfotransferase 2 (371 aa).

The Cytoplasmic portion of the chain corresponds to M1–V8. Residues L9–G25 traverse the membrane as a helical; Signal-anchor for type II membrane protein segment. Residues Q26 to H371 are Lumenal-facing. Position 76-80 (R76–T80) interacts with 3'-phosphoadenylyl sulfate. A disulfide bridge connects residues C94 and C154. Residue E97 is the Proton donor/acceptor of the active site. An interaction with peptide substrate region spans residues R99 to R103. 3'-phosphoadenylyl sulfate is bound by residues R181, S189, and R193. The cysteines at positions 223 and 231 are disulfide-linked. 3'-phosphoadenylyl sulfate contacts are provided by residues Y236, S283–N292, and K298. N-linked (GlcNAc...) asparagine glycosylation is found at N341 and N366.

It belongs to the protein sulfotransferase family.

Its subcellular location is the golgi apparatus membrane. The enzyme catalyses L-tyrosyl-[protein] + 3'-phosphoadenylyl sulfate = O-sulfo-L-tyrosine-[protein] + adenosine 3',5'-bisphosphate + H(+). In terms of biological role, catalyzes the O-sulfation of tyrosine residues within acidic motifs of polypeptides, using 3'-phosphoadenylyl sulfate (PAPS) as cosubstrate. The protein is Protein-tyrosine sulfotransferase 2 (TPST2) of Gallus gallus (Chicken).